Consider the following 511-residue polypeptide: Bifunctional purine biosynthesis protein PurH (511 aa).

An MGS-like domain is found at 1 to 145 (MKRRALVSVS…KNHQHVTVVV (145 aa)).

It belongs to the PurH family.

It carries out the reaction (6R)-10-formyltetrahydrofolate + 5-amino-1-(5-phospho-beta-D-ribosyl)imidazole-4-carboxamide = 5-formamido-1-(5-phospho-D-ribosyl)imidazole-4-carboxamide + (6S)-5,6,7,8-tetrahydrofolate. It catalyses the reaction IMP + H2O = 5-formamido-1-(5-phospho-D-ribosyl)imidazole-4-carboxamide. It participates in purine metabolism; IMP biosynthesis via de novo pathway; 5-formamido-1-(5-phospho-D-ribosyl)imidazole-4-carboxamide from 5-amino-1-(5-phospho-D-ribosyl)imidazole-4-carboxamide (10-formyl THF route): step 1/1. Its pathway is purine metabolism; IMP biosynthesis via de novo pathway; IMP from 5-formamido-1-(5-phospho-D-ribosyl)imidazole-4-carboxamide: step 1/1. The sequence is that of Bifunctional purine biosynthesis protein PurH from Halalkalibacterium halodurans (strain ATCC BAA-125 / DSM 18197 / FERM 7344 / JCM 9153 / C-125) (Bacillus halodurans).